Consider the following 467-residue polypeptide: 3-isopropylmalate dehydratase large subunit (467 aa).

The [4Fe-4S] cluster site is built by Cys-349, Cys-408, and Cys-411.

The protein belongs to the aconitase/IPM isomerase family. LeuC type 1 subfamily. Heterodimer of LeuC and LeuD. [4Fe-4S] cluster serves as cofactor.

It carries out the reaction (2R,3S)-3-isopropylmalate = (2S)-2-isopropylmalate. It functions in the pathway amino-acid biosynthesis; L-leucine biosynthesis; L-leucine from 3-methyl-2-oxobutanoate: step 2/4. Its function is as follows. Catalyzes the isomerization between 2-isopropylmalate and 3-isopropylmalate, via the formation of 2-isopropylmaleate. The sequence is that of 3-isopropylmalate dehydratase large subunit from Dinoroseobacter shibae (strain DSM 16493 / NCIMB 14021 / DFL 12).